Here is a 125-residue protein sequence, read N- to C-terminus: Large ribosomal subunit protein bL19 (125 aa).

It belongs to the bacterial ribosomal protein bL19 family.

Functionally, this protein is located at the 30S-50S ribosomal subunit interface and may play a role in the structure and function of the aminoacyl-tRNA binding site. The polypeptide is Large ribosomal subunit protein bL19 (Synechococcus sp. (strain JA-2-3B'a(2-13)) (Cyanobacteria bacterium Yellowstone B-Prime)).